The sequence spans 163 residues: Large ribosomal subunit protein uL10 (163 aa).

This sequence belongs to the universal ribosomal protein uL10 family. As to quaternary structure, part of the ribosomal stalk of the 50S ribosomal subunit. The N-terminus interacts with L11 and the large rRNA to form the base of the stalk. The C-terminus forms an elongated spine to which L12 dimers bind in a sequential fashion forming a multimeric L10(L12)X complex.

Functionally, forms part of the ribosomal stalk, playing a central role in the interaction of the ribosome with GTP-bound translation factors. The polypeptide is Large ribosomal subunit protein uL10 (Haemophilus influenzae (strain PittEE)).